The following is a 252-amino-acid chain: Probable phosphatase Shewana3_2794 (252 aa).

Positions 8, 10, 16, 41, 74, 102, 132, 193, and 195 each coordinate Zn(2+).

It belongs to the PHP family. It depends on Zn(2+) as a cofactor.

The sequence is that of Probable phosphatase Shewana3_2794 from Shewanella sp. (strain ANA-3).